The sequence spans 880 residues: Inner centromere protein (880 aa).

The segment at 52–104 is disordered; sequence EPELMPKTPSQKNRRKKRRVSNIQDENRDPVRKRLSRRKSRSSQVGTRHLRSK. Phosphoserine is present on residues S72, S142, and S147. Residues T149 and T189 each carry the phosphothreonine modification. Residues 175–229 form a disordered region; it reads KGSLPPSPVSQGTLTSEEELTPKKSEAGKLDSVTVNSLKATPQSPKNRGVGEGRS. Phosphoserine is present on S190. A compositionally biased stretch (basic and acidic residues) spans 194–203; the sequence is LTPKKSEAGK. 2 positions are modified to phosphothreonine: T195 and T215. The span at 207–220 shows a compositional bias: polar residues; sequence VTVNSLKATPQSPK. S218, S239, S245, S248, S251, and S259 each carry phosphoserine. T270 carries the phosphothreonine modification. Phosphoserine occurs at positions 284 and 290. 2 disordered regions span residues 303–322 and 350–461; these read KQEN…AGKE and EQEP…PANK. Residues 352-366 are compositionally biased toward acidic residues; it reads EPVEVAEPEEAEEEQ. The residue at position 376 (S376) is a Phosphoserine. T382 is modified (phosphothreonine). The span at 385 to 402 shows a compositional bias: polar residues; the sequence is AISTPTSKPAAAGQTTTV. A Phosphoserine modification is found at S421. Residues 434–445 are compositionally biased toward acidic residues; that stretch reads EPDEEQLEDEEL. N-linked (GlcNAc...) asparagine glycosylation is present at N450. T452 is subject to Phosphothreonine. Phosphoserine occurs at positions 454 and 488. The interval 506 to 733 is SAH; that stretch reads KCSFVEKERQ…EEKKRKEEQQ (228 aa). Positions 506 to 759 form a coiled coil; it reads KCSFVEKERQ…EVAAARKVLN (254 aa). Disordered stretches follow at residues 513 to 541, 563 to 617, 629 to 713, and 775 to 813; these read ERQR…KRRR, VEQM…KQEE, EEER…KALR, and TPQG…IPSW. Basic and acidic residues-rich tracts occupy residues 563–596, 604–617, and 630–713; these read VEQM…LAEK, KKME…KQEE, and EERR…KALR. The IN box stretch occupies residues 794 to 868; it reads LNSDDSTDDE…RTSSAVWNSP (75 aa). Phosphoserine is present on residues S796 and S799. T800 is subject to Phosphothreonine. The residue at position 860 (T860) is a Phosphothreonine; by AURKB. Residues S861, S862, and S867 each carry the phosphoserine modification.

The protein belongs to the INCENP family. As to quaternary structure, component of the chromosomal passenger complex (CPC) composed of at least BIRC5/survivin, CDCA8/borealin, INCENP, AURKB or AURKC; in the complex binds directly to AURKB or AURKC via the IN box, and forms a triple-helix bundle-based subcomplex with BIRC5 and CDCA8 via its N-terminus. The reported homodimerization is questioned as the SAH domain is shown to be monomeric. Interacts with H2AZ1. Interacts with CBX1 and CBX3. Interacts with tubulin beta chain. Interacts with EVI5. Interacts with CBX5; POGZ and INCENP compete for interaction with CBX5. Interacts with POGZ. Interacts with JTB. In terms of processing, phosphorylation by AURKB at its C-terminal part is important for AURKB activation by INCENP.

It localises to the chromosome. It is found in the centromere. The protein resides in the cytoplasm. Its subcellular location is the cytoskeleton. The protein localises to the spindle. It localises to the nucleus. It is found in the kinetochore. The protein resides in the midbody. Its function is as follows. Component of the chromosomal passenger complex (CPC), a complex that acts as a key regulator of mitosis. The CPC complex has essential functions at the centromere in ensuring correct chromosome alignment and segregation and is required for chromatin-induced microtubule stabilization and spindle assembly. Acts as a scaffold regulating CPC localization and activity. The C-terminus associates with AURKB or AURKC, the N-terminus associated with BIRC5/survivin and CDCA8/borealin tethers the CPC to the inner centromere, and the microtubule binding activity within the central SAH domain directs AURKB/C toward substrates near microtubules. The flexibility of the SAH domain is proposed to allow AURKB/C to follow substrates on dynamic microtubules while ensuring CPC docking to static chromatin. Activates AURKB and AURKC. Controls the kinetochore localization of BUB1. The sequence is that of Inner centromere protein (Incenp) from Mus musculus (Mouse).